Here is a 368-residue protein sequence, read N- to C-terminus: GDSL esterase/lipase At4g16230 (368 aa).

Residues 1–24 (MSLLVFLCQIIVLSVLFFSEVCLA) form the signal peptide. Serine 37 (nucleophile) is an active-site residue. N-linked (GlcNAc...) asparagine glycans are attached at residues asparagine 117 and asparagine 286. Residues aspartate 329 and histidine 332 contribute to the active site.

This sequence belongs to the 'GDSL' lipolytic enzyme family.

It localises to the secreted. The sequence is that of GDSL esterase/lipase At4g16230 from Arabidopsis thaliana (Mouse-ear cress).